A 354-amino-acid polypeptide reads, in one-letter code: Sorbitol dehydrogenase (354 aa).

Residue Cys-43 participates in Zn(2+) binding. Tyr-49 provides a ligand contact to substrate. The Zn(2+) site is built by His-67 and Glu-68. Residue Glu-153 participates in substrate binding. NAD(+) is bound by residues Ile-181, Asp-201, and Arg-206. 2 positions are modified to phosphoserine: Ser-208 and Ser-222. Residues 270–272 (VGL) and 294–296 (VFR) contribute to the NAD(+) site. Residues Arg-296 and Tyr-297 each contribute to the substrate site.

Belongs to the zinc-containing alcohol dehydrogenase family. As to quaternary structure, homotetramer. Requires Zn(2+) as cofactor. As to expression, expressed in liver.

It is found in the mitochondrion membrane. It localises to the cell projection. Its subcellular location is the cilium. The protein localises to the flagellum. It catalyses the reaction xylitol + NAD(+) = D-xylulose + NADH + H(+). The catalysed reaction is L-iditol + NAD(+) = keto-L-sorbose + NADH + H(+). It carries out the reaction keto-D-fructose + NADH + H(+) = D-sorbitol + NAD(+). Its function is as follows. Polyol dehydrogenase that catalyzes the reversible NAD(+)-dependent oxidation of various sugar alcohols. Is mostly active with xylitol, L-iditol and D-sorbitol (D-glucitol) as substrates, leading to the C2-oxidized products D-xylulose, L-sorbose and D-fructose, respectively. Is a key enzyme in the polyol pathway that interconverts glucose and fructose via sorbitol, which constitutes an important alternate route for glucose metabolism. May play a role in sperm motility by using sorbitol as an alternative energy source for sperm motility. The polypeptide is Sorbitol dehydrogenase (SORD) (Ovis aries (Sheep)).